The sequence spans 769 residues: Cap-specific mRNA (nucleoside-2'-O-)-methyltransferase 2 (769 aa).

In terms of domain architecture, Adrift-type SAM-dependent 2'-O-MTase spans Glu109–Gly322. Lys117 is a catalytic residue. S-adenosyl-L-methionine is bound by residues Gly148, Trp167, and Asp235. Residue Asp235 is part of the active site. Lys275 (proton acceptor) is an active-site residue.

The protein resides in the nucleus. The protein localises to the cytoplasm. The enzyme catalyses a 5'-end (N(7)-methyl 5'-triphosphoguanosine)-(2'-O-methyl-ribonucleoside)-(ribonucleotide) in mRNA + S-adenosyl-L-methionine = a 5'-end (N(7)-methyl 5'-triphosphoguanosine)-(2'-O-methyl-ribonucleoside)-(2'-O-methyl-ribonucleotide) in mRNA + S-adenosyl-L-homocysteine + H(+). Functionally, S-adenosyl-L-methionine-dependent methyltransferase that mediates mRNA cap2 2'-O-ribose methylation to the 5'-cap structure of mRNAs. Methylates the ribose of the second nucleotide of a m(7)GpppG-capped mRNA and small nuclear RNA (snRNA) (cap0) to produce m(7)GpppRmpNm (cap2). Recognizes a guanosine cap on RNA independently of its N(7) methylation status. Display cap2 methylation on both cap0 and cap1. Displays a preference for cap1 RNAs. This is Cap-specific mRNA (nucleoside-2'-O-)-methyltransferase 2 (CMTR2) from Pongo abelii (Sumatran orangutan).